A 1402-amino-acid polypeptide reads, in one-letter code: Transcription elongation factor spt-6 (1402 aa).

The interval 1–199 (MSNSMRDLID…PKDRGLNIDT (199 aa)) is disordered. 4 stretches are compositionally biased toward acidic residues: residues 10–28 (DGEA…DEEA), 40–52 (DSSE…EDEE), 62–75 (IVDE…EDSD), and 90–102 (EEEE…DLDL). Positions 123-135 (HRDDHRPTERRGL) are enriched in basic and acidic residues. The span at 161-176 (DEFDDFIEDDYPEDDE) shows a compositional bias: acidic residues. Over residues 177–199 (ERRHREEDEEVARPKDRGLNIDT) the composition is skewed to basic and acidic residues. Residues 1094 to 1161 (GMIVAANVRV…KEFVSKLSMR (68 aa)) form the S1 motif domain. The region spanning 1209–1306 (PLFKPFNSTQ…KKVDELMQCD (98 aa)) is the SH2 domain.

This sequence belongs to the SPT6 family.

It localises to the nucleus. The protein resides in the chromosome. Functionally, histone H3-H4 chaperone that plays a role in maintenance of chromatin structure during RNA polymerase II transcription elongation thereby repressing transcription initiation from cryptic promoters. Mediates the reassembly of nucleosomes onto the promoters of at least a selected set of genes during repression; the nucleosome reassembly is essential for transcriptional repression. Essential for viability. The protein is Transcription elongation factor spt-6 (spt-6) of Neurospora crassa (strain ATCC 24698 / 74-OR23-1A / CBS 708.71 / DSM 1257 / FGSC 987).